The following is a 106-amino-acid chain: GATVKVTNATFKSDVLESDKPVLVHFEGPWCGPCKMVAPVLDEIANEYEGKVKVAKVNTDENPQLASQYGVRSIPTRLMFKGGEVAANMVGAAPKTRLAAFLDASL.

The Thioredoxin domain maps to glycine 1–leucine 106. An intrachain disulfide couples cysteine 31 to cysteine 34.

It belongs to the thioredoxin family.

Functionally, participates in various redox reactions through the reversible oxidation of its active center dithiol to a disulfide and catalyzes dithiol-disulfide exchange reactions. The chain is Thioredoxin (trxA) from Kitasatospora aureofaciens (Streptomyces aureofaciens).